Consider the following 1494-residue polypeptide: B-cell CLL/lymphoma 9-like protein (1494 aa).

2 disordered regions span residues 1 to 236 (MRIL…PPSQ) and 269 to 496 (VPRA…DMGQ). Positions 20 to 37 (GSPPLSPRGHCPPAPAKP) are enriched in pro residues. Phosphoserine is present on residues S21 and S25. K36 carries the post-translational modification N6-acetyllysine. Polar residues-rich tracts occupy residues 45–70 (TNHG…TCNL) and 85–96 (NQISPSNSSLKN). Residue S88 is modified to Phosphoserine. 2 positions are modified to N6-acetyllysine: K108 and K110. Basic and acidic residues-rich tracts occupy residues 114–126 (ERSV…EQRE) and 134–153 (SEAK…ERKQ). A phosphoserine mark is found at S116 and S118. An N6-acetyllysine modification is found at K137. The segment covering 193–207 (PGQTAQLPLSESSAP) has biased composition (polar residues). Pro residues-rich tracts occupy residues 279 to 289 (KVPPTPEPLPL) and 299 to 322 (SQPP…PPEG). The tract at residues 302–530 (PPLPPPPPAP…QEEYYEEKRR (229 aa)) is necessary for interaction with CTNNB1. The segment covering 348 to 360 (THPNTPTAATANN) has biased composition (low complexity). A compositionally biased stretch (basic and acidic residues) spans 396–418 (LSKEQLEHRERSLQTLRDIERLL). Phosphoserine is present on S421. A Phosphothreonine modification is found at T511. Residue R677 is modified to Asymmetric dimethylarginine. Phosphoserine is present on residues S747, S810, S912, S923, S935, S939, S944, S972, S984, S988, S994, S1001, S1007, and S1014. Disordered stretches follow at residues 905–1082 (RGLG…NPLS) and 1113–1206 (ELLP…PGGP). Residues 932–957 (PTLSQVHSPLVTSPSANLKSPQTPSQ) show a composition bias toward polar residues. Positions 974–993 (QVLSSSLGVRSPTGSPSRLK) are enriched in polar residues. Over residues 1016–1035 (GVSQNKQPPLSINSSSTLGN) the composition is skewed to polar residues. Over residues 1046 to 1059 (PRNSSSAPPANPSS) the composition is skewed to low complexity. Polar residues predominate over residues 1060–1082 (GLMNPSLPFTSSPDPTPSQNPLS). Over residues 1119-1129 (PLLPPPPPPQG) the composition is skewed to pro residues. The span at 1133 to 1143 (GISNNQPNQMH) shows a compositional bias: polar residues. The segment covering 1165–1176 (HEPPPTMLPSPT) has biased composition (pro residues). Residue K1339 forms a Glycyl lysine isopeptide (Lys-Gly) (interchain with G-Cter in SUMO2) linkage.

It belongs to the BCL9 family. In terms of assembly, found in a complex with CDC73; CTNNB1 and PYGO1. Interacts with CTNNB1. As to expression, expressed in kidney, liver, lung, testis, brain, spleen, heart and skeletal muscle. Highly expressed in numerous colorectal tumors compared to corresponding non-cancerous tissues.

Its subcellular location is the nucleus. In terms of biological role, transcriptional regulator that acts as an activator. Promotes beta-catenin transcriptional activity. Plays a role in tumorigenesis. Enhances the neoplastic transforming activity of CTNNB1. The protein is B-cell CLL/lymphoma 9-like protein (Bcl9l) of Mus musculus (Mouse).